Reading from the N-terminus, the 1666-residue chain is Probable clathrin heavy chain (1666 aa).

WD40-like repeat regions lie at residues 24–67 (SFGF…RPIS), 68–107 (ADSVILHPKKKIIALKAQRQLQVFDLEAKAKINSYVMNQD), 108–148 (VVYW…SSLN), 149–194 (GTQI…QPLE), 195–255 (SHAS…PEAV), 256–299 (NDFP…VSGE), and 300–328 (SIFVTTAHKSVNGLMAINRKGQVLSVSIN). Phosphothreonine is present on Thr-392. Ser-393 carries the phosphoserine modification. 7 CHCR repeats span residues 534 to 680 (MFNS…QIVV), 683 to 825 (ATRY…DEEL), 830 to 969 (LMSV…LLDQ), 975 to 1120 (VPES…IPDA), 1124 to 1265 (YLKA…FRLA), 1270 to 1415 (LNLI…MLLT), and 1418 to 1561 (LAAL…YECF).

The protein belongs to the clathrin heavy chain family. In terms of assembly, clathrin triskelions, composed of 3 heavy chains and 3 light chains, are the basic subunits of the clathrin coat.

The protein resides in the cytoplasmic vesicle membrane. It is found in the membrane. It localises to the coated pit. Clathrin is the major protein of the polyhedral coat of coated pits and vesicles. This Schizosaccharomyces pombe (strain 972 / ATCC 24843) (Fission yeast) protein is Probable clathrin heavy chain (chc1).